A 74-amino-acid polypeptide reads, in one-letter code: Cytoplasmic envelopment protein 3 (74 aa).

Gly2 carries N-myristoyl glycine; by host lipidation. The Di-leucine-like internalization motif signature appears at 15-16; the sequence is LV. The tract at residues 34-40 is asp/Glu-rich (acidic); that stretch reads SMEEFDI. Residues 36–74 are disordered; sequence EEFDIPPPPPLPKPVFKQPGPYKIPARSQRCPSKRRDPY.

This sequence belongs to the herpesviridae cytoplasmic envelopment protein 3 family. Interacts with cytoplasmic envelopment protein 2; this interaction is essential for the proper localization of each protein to the assembly complex and thus for the production of infectious virus. Post-translationally, myristoylation and palmitoylation (probably on one or more of the nearby cysteines at the N-terminus) enable membrane-binding and Golgi apparatus-specific targeting and are essential for efficient packaging. In terms of processing, phosphorylated. Phosphorylation does not seem to be required for recycling to the host Golgi apparatus. Packaging is selective for underphosphorylated forms.

The protein resides in the virion tegument. Its subcellular location is the virion membrane. The protein localises to the host cell membrane. It localises to the host Golgi apparatus membrane. Its function is as follows. Plays an important role in the cytoplasmic envelopment of tegument proteins and capsids during the assembly and egress processes. Also participates in viral entry at the fusion step probably by regulating the core fusion machinery. The sequence is that of Cytoplasmic envelopment protein 3 from Equine herpesvirus 1 (strain Ab4p) (EHV-1).